We begin with the raw amino-acid sequence, 578 residues long: Cyclin-SDS (578 aa).

The segment at 1-31 (MKEIAMRNSKRKPEPTPFAGKKLRSTRLRRK) is disordered. Basic residues predominate over residues 21–31 (KKLRSTRLRRK).

It belongs to the cyclin family. As to quaternary structure, may interact with CDKA-1 and CDKB1-1.

Meiosis-specific cyclin. Required for normal homolog synapsis and recombination in early to mid-prophase 1. May regulate the timing of sister chromatid separation. This is Cyclin-SDS (SDS) from Arabidopsis thaliana (Mouse-ear cress).